The following is a 245-amino-acid chain: UDP-2,3-diacylglucosamine hydrolase (245 aa).

Mn(2+) is bound by residues D8, H10, D41, N80, and H115. 80–81 (NR) provides a ligand contact to substrate. D123, S161, K165, K168, and H196 together coordinate substrate. 2 residues coordinate Mn(2+): H196 and H198.

This sequence belongs to the LpxH family. Requires Mn(2+) as cofactor.

The protein resides in the cell inner membrane. It catalyses the reaction UDP-2-N,3-O-bis[(3R)-3-hydroxytetradecanoyl]-alpha-D-glucosamine + H2O = 2-N,3-O-bis[(3R)-3-hydroxytetradecanoyl]-alpha-D-glucosaminyl 1-phosphate + UMP + 2 H(+). The protein operates within glycolipid biosynthesis; lipid IV(A) biosynthesis; lipid IV(A) from (3R)-3-hydroxytetradecanoyl-[acyl-carrier-protein] and UDP-N-acetyl-alpha-D-glucosamine: step 4/6. Hydrolyzes the pyrophosphate bond of UDP-2,3-diacylglucosamine to yield 2,3-diacylglucosamine 1-phosphate (lipid X) and UMP by catalyzing the attack of water at the alpha-P atom. Involved in the biosynthesis of lipid A, a phosphorylated glycolipid that anchors the lipopolysaccharide to the outer membrane of the cell. This chain is UDP-2,3-diacylglucosamine hydrolase, found in Psychromonas ingrahamii (strain DSM 17664 / CCUG 51855 / 37).